The sequence spans 146 residues: Putative pre-16S rRNA nuclease (146 aa).

It belongs to the YqgF nuclease family.

It localises to the cytoplasm. Could be a nuclease involved in processing of the 5'-end of pre-16S rRNA. This Pseudomonas syringae pv. syringae (strain B728a) protein is Putative pre-16S rRNA nuclease.